The sequence spans 152 residues: MCSLPMARYYIIKYADQKALYTRDGQLLVGDPVADNCCAEKICILPNRGLARTKVPIFLGIQGGSRCLACVETEEGPSLQLEDVNIEELYKGGEEATRFTFFQSSSGSAFRLEAAAWPGWFLCGPAEPQQPVQLTKESEPSARTKFYFEQSW.

Belongs to the IL-1 family. Interacts with cargo receptor TMED10; the interaction mediates the translocation from the cytoplasm into the ERGIC (endoplasmic reticulum-Golgi intermediate compartment) and thereby secretion. Expressed in fetal skin, spleen and tonsil. Expressed mostly in the basal epithelia of skin and in proliferating B-cells of the tonsil.

It localises to the cytoplasm. The protein localises to the secreted. Its function is as follows. Cytokine with immunomodulatory activity. Alone, does not induce cytokine production, but reduces IL22 and IL17A production by T-cells in response to heat-killed Candida albicans. Reduces IL36G-induced production of IL8 by peripheral blood mononuclear cells. Increases IL6 production by dendritic cells stimulated by bacterial lipopolysaccharides (LPS). Ligand for IL-36R/IL1RL2. The polypeptide is Interleukin-1 family member 10 (Homo sapiens (Human)).